A 164-amino-acid chain; its full sequence is MNFATADLCDAHEDQLTAGTLRVLDPVFSRFGRASRFGGEAVTLKVFEDNTLVRATLEEKGVARVLVVDGGGSLRCALVGGNLGKLGEKNGWAGIVVFGCVRDTLELNECNLGIIALATHPQRSQKRGGGERDVSLRLPGSVVRPGEWIYADSDGVLVSSAPLV.

Substrate is bound by residues 80–83 (GGNL) and arginine 102. Aspartate 103 provides a ligand contact to a divalent metal cation.

Belongs to the class II aldolase/RraA-like family. Homotrimer. The cofactor is a divalent metal cation.

It catalyses the reaction 4-hydroxy-4-methyl-2-oxoglutarate = 2 pyruvate. It carries out the reaction oxaloacetate + H(+) = pyruvate + CO2. Catalyzes the aldol cleavage of 4-hydroxy-4-methyl-2-oxoglutarate (HMG) into 2 molecules of pyruvate. Also contains a secondary oxaloacetate (OAA) decarboxylase activity due to the common pyruvate enolate transition state formed following C-C bond cleavage in the retro-aldol and decarboxylation reactions. This Paraburkholderia phymatum (strain DSM 17167 / CIP 108236 / LMG 21445 / STM815) (Burkholderia phymatum) protein is Putative 4-hydroxy-4-methyl-2-oxoglutarate aldolase.